Reading from the N-terminus, the 121-residue chain is uncharacterized protein (121 aa).

One can recognise a Cupin type-2 domain in the interval 47-101; the sequence is SEVPHYHAEHDLTFTVLKGKGELYLEGEKKKLKEGDWAFIPKGAVHFYRNTSELS.

This is an uncharacterized protein from Aquifex aeolicus (strain VF5).